The sequence spans 185 residues: Lactoylglutathione lyase (185 aa).

The segment at 1-21 (MASEAKESPANNPGLSTVRDE) is disordered. In terms of domain architecture, VOC spans 27–174 (IMQQTMFRVK…DGYWIEIFDL (148 aa)). Positions 30 and 34 each coordinate substrate. Q30 serves as a coordination point for Zn(2+). Position 96 (E96) interacts with Zn(2+). Substrate contacts are provided by residues N100, R120, H124, and 154-155 (KM). Zn(2+) is bound at residue H124. E170 lines the Zn(2+) pocket. E170 (proton donor/acceptor) is an active-site residue.

This sequence belongs to the glyoxalase I family. The cofactor is Zn(2+).

It catalyses the reaction (R)-S-lactoylglutathione = methylglyoxal + glutathione. Its pathway is secondary metabolite metabolism; methylglyoxal degradation; (R)-lactate from methylglyoxal: step 1/2. Its function is as follows. Catalyzes the conversion of hemimercaptal, formed from methylglyoxal and glutathione, to S-lactoylglutathione. The polypeptide is Lactoylglutathione lyase (GLY I) (Brassica juncea (Indian mustard)).